The sequence spans 349 residues: D-arabinitol dehydrogenase 1 (349 aa).

Positions 46, 67, 97, 100, 103, 111, and 151 each coordinate Zn(2+).

This sequence belongs to the zinc-containing alcohol dehydrogenase family. Zn(2+) serves as cofactor.

It localises to the cell projection. The catalysed reaction is D-arabinitol + NADP(+) = D-xylulose + NADPH + H(+). The enzyme catalyses D-arabinitol + NADP(+) = D-ribulose + NADPH + H(+). Functionally, D-arabinitol dehydrogenase which mostly produces D-arabinitol in haustoria, the appendages of the parasitic fungus that penetrate the host's tissue and draws nutrients from it. D-arabinitol accumulation may serve as a carbohydrate storage compound. D-arabinitol is also capable of quenching reactive oxygen species involved in host plant defense reactions, thus providing protection for the rust fungus during the pathogenic interaction. This Uromyces fabae (Rust fungus) protein is D-arabinitol dehydrogenase 1 (ARD1).